Consider the following 353-residue polypeptide: Small ribosomal subunit biogenesis GTPase RsgA (353 aa).

The disordered stretch occupies residues 1 to 24; sequence MSKNKLSKGQQRRVKANHQRRLKT. Residues 10–23 are compositionally biased toward basic residues; sequence QQRRVKANHQRRLK. The CP-type G domain maps to 104 to 274; the sequence is ASVLTRPDFY…VIDSPGVREF (171 aa). Residues 160-163 and 214-222 each bind GTP; these read NKID and GQSGVGKSS. 4 residues coordinate Zn(2+): Cys298, Cys303, His305, and Cys311.

This sequence belongs to the TRAFAC class YlqF/YawG GTPase family. RsgA subfamily. Monomer. Associates with 30S ribosomal subunit, binds 16S rRNA. Zn(2+) is required as a cofactor.

Its subcellular location is the cytoplasm. Its function is as follows. One of several proteins that assist in the late maturation steps of the functional core of the 30S ribosomal subunit. Helps release RbfA from mature subunits. May play a role in the assembly of ribosomal proteins into the subunit. Circularly permuted GTPase that catalyzes slow GTP hydrolysis, GTPase activity is stimulated by the 30S ribosomal subunit. This chain is Small ribosomal subunit biogenesis GTPase RsgA, found in Klebsiella pneumoniae subsp. pneumoniae (strain ATCC 700721 / MGH 78578).